Here is a 947-residue protein sequence, read N- to C-terminus: Protein translocase subunit SecA (947 aa).

Residues Gln-87, 105–109, and Asp-494 each bind ATP; that span reads GEGKT. Residues 860–947 form a disordered region; the sequence is TAPKPLPTQE…NRAPKSKRKR (88 aa). Residues 870–885 are compositionally biased toward low complexity; that stretch reads AAARTTGTAAPTALRA. 2 stretches are compositionally biased toward basic and acidic residues: residues 903-914 and 922-931; these read EDGKAKATRDSA and ASRRERREAA.

It belongs to the SecA family. As to quaternary structure, monomer and homodimer. Part of the essential Sec protein translocation apparatus which comprises SecA, SecYEG and auxiliary proteins SecDF. Other proteins may also be involved.

The protein localises to the cell membrane. Its subcellular location is the cytoplasm. The enzyme catalyses ATP + H2O + cellular proteinSide 1 = ADP + phosphate + cellular proteinSide 2.. In terms of biological role, part of the Sec protein translocase complex. Interacts with the SecYEG preprotein conducting channel. Has a central role in coupling the hydrolysis of ATP to the transfer of proteins into and across the cell membrane, serving as an ATP-driven molecular motor driving the stepwise translocation of polypeptide chains across the membrane. The chain is Protein translocase subunit SecA from Rhodococcus erythropolis (strain PR4 / NBRC 100887).